A 451-amino-acid chain; its full sequence is Epstein-Barr nuclear antigen 2 (451 aa).

Residues 1–176 (MPTFYLALHG…TPPTPLPPAT (176 aa)) form an SMARCB1/INI1 binding region. 2 disordered regions span residues 52–78 (VGENTGVPPPPPPPPQRRDAWTQEPSP) and 148–451 (PLSQ…PSIQ). Composition is skewed to pro residues over residues 154–193 (LTPPQPLMMPPRPTPPTPLPPATLTVPPRPTRPTTLPPTP), 252–273 (PPMPLPPSQLPPPAAPAQPPPG), and 285–299 (SGPPWWPPICDPPQP). Low complexity predominate over residues 300–309 (SKTQGQSRGQ). The segment covering 310–330 (SRGRGRGRGRGRGKSRDKQRK) has biased composition (basic residues). 7 tandem repeats follow at residues 311–312 (RG), 313–314 (RG), 315–316 (RG), 317–318 (RG), 319–320 (RG), 321–322 (RG), and 323–324 (KS). The segment at 311–324 (RGRGRGRGRGRGKS) is 6.5 X 2 AA tandem repeats of R-G. 2 consecutive short sequence motifs (PXLXP motif, interaction with host ZMYND11) follow at residues 347–351 (PELSP) and 401–405 (PILFP).

Belongs to the herpesviridae EBNA2 family. Interacts with human SMARCB1/INI1, presumably generating an open chromatin conformation at the EBNA2-responsive target genes. Interacts with human WAPL. Interacts with host CBF1; this interaction allows transcriptional activation by EBNA2. Interacts with host general transcription factors GTF2B, ERCC2 and ERCC3. Interacts (via PXLXP motif) with host ZMYND11/BS69 (via MYND-type zinc finger). Interacts with host EBF1. Post-translationally, phosphorylated.

Its subcellular location is the host nucleus matrix. Plays a key role in the activation of the host resting B-cell and stimulation of B-cell proliferation. Acts by up-regulating the expression of viral EBNA1-6, LMP1, LMP2A and LMP2B genes, as well as several host genes including CD21, CD23 and MYC. Activates transcription by acting as an adapter molecule that binds to cellular sequence-specific DNA-binding proteins such as host CBF1, SMARCB1 and SPI1. Once EBNA2 is near promoter sites, its acidic activating domain recruits basal and activation-associated transcription factors TFIIB, TAF40, TFIIH components ERCC2 and ERCC3, and CBP in order to promote transcription. Alternatively, EBNA2 can affect activities of cell cycle regulators and retard cell cycle progression at G2/M phase. It also induces chromosomal instability, by disrupting mitotic checkpoints, multi-nucleation and formation of micronuclei in infected cells. This Epstein-Barr virus (strain GD1) (HHV-4) protein is Epstein-Barr nuclear antigen 2 (EBNA2).